Reading from the N-terminus, the 339-residue chain is Holliday junction branch migration complex subunit RuvB (339 aa).

Positions Lys2–Tyr187 are large ATPase domain (RuvB-L). ATP contacts are provided by residues Leu26, Arg27, Gly68, Lys71, Thr72, Thr73, Glu134–Phe136, Arg177, Tyr187, and Arg224. Thr72 is a Mg(2+) binding site. A small ATPAse domain (RuvB-S) region spans residues Ser188 to Glu258. The segment at Asp261–Lys339 is head domain (RuvB-H). DNA is bound by residues Arg316 and Arg321.

Belongs to the RuvB family. As to quaternary structure, homohexamer. Forms an RuvA(8)-RuvB(12)-Holliday junction (HJ) complex. HJ DNA is sandwiched between 2 RuvA tetramers; dsDNA enters through RuvA and exits via RuvB. An RuvB hexamer assembles on each DNA strand where it exits the tetramer. Each RuvB hexamer is contacted by two RuvA subunits (via domain III) on 2 adjacent RuvB subunits; this complex drives branch migration. In the full resolvosome a probable DNA-RuvA(4)-RuvB(12)-RuvC(2) complex forms which resolves the HJ.

It is found in the cytoplasm. It catalyses the reaction ATP + H2O = ADP + phosphate + H(+). In terms of biological role, the RuvA-RuvB-RuvC complex processes Holliday junction (HJ) DNA during genetic recombination and DNA repair, while the RuvA-RuvB complex plays an important role in the rescue of blocked DNA replication forks via replication fork reversal (RFR). RuvA specifically binds to HJ cruciform DNA, conferring on it an open structure. The RuvB hexamer acts as an ATP-dependent pump, pulling dsDNA into and through the RuvAB complex. RuvB forms 2 homohexamers on either side of HJ DNA bound by 1 or 2 RuvA tetramers; 4 subunits per hexamer contact DNA at a time. Coordinated motions by a converter formed by DNA-disengaged RuvB subunits stimulates ATP hydrolysis and nucleotide exchange. Immobilization of the converter enables RuvB to convert the ATP-contained energy into a lever motion, pulling 2 nucleotides of DNA out of the RuvA tetramer per ATP hydrolyzed, thus driving DNA branch migration. The RuvB motors rotate together with the DNA substrate, which together with the progressing nucleotide cycle form the mechanistic basis for DNA recombination by continuous HJ branch migration. Branch migration allows RuvC to scan DNA until it finds its consensus sequence, where it cleaves and resolves cruciform DNA. The sequence is that of Holliday junction branch migration complex subunit RuvB from Lactobacillus johnsonii (strain CNCM I-12250 / La1 / NCC 533).